The chain runs to 459 residues: Replication initiator protein (459 aa).

Functionally, essential for pSAM2 replication. The sequence is that of Replication initiator protein (repSA) from Streptomyces ambofaciens.